Here is a 245-residue protein sequence, read N- to C-terminus: 1-(5-phosphoribosyl)-5-[(5-phosphoribosylamino)methylideneamino] imidazole-4-carboxamide isomerase (245 aa).

Catalysis depends on aspartate 7, which acts as the Proton acceptor. Aspartate 129 functions as the Proton donor in the catalytic mechanism.

This sequence belongs to the HisA/HisF family.

The protein localises to the cytoplasm. The enzyme catalyses 1-(5-phospho-beta-D-ribosyl)-5-[(5-phospho-beta-D-ribosylamino)methylideneamino]imidazole-4-carboxamide = 5-[(5-phospho-1-deoxy-D-ribulos-1-ylimino)methylamino]-1-(5-phospho-beta-D-ribosyl)imidazole-4-carboxamide. It functions in the pathway amino-acid biosynthesis; L-histidine biosynthesis; L-histidine from 5-phospho-alpha-D-ribose 1-diphosphate: step 4/9. The polypeptide is 1-(5-phosphoribosyl)-5-[(5-phosphoribosylamino)methylideneamino] imidazole-4-carboxamide isomerase (Enterobacter sp. (strain 638)).